The chain runs to 90 residues: Small ribosomal subunit protein uS15c (90 aa).

Belongs to the universal ribosomal protein uS15 family. As to quaternary structure, part of the 30S ribosomal subunit.

It localises to the plastid. The protein resides in the chloroplast. The protein is Small ribosomal subunit protein uS15c (rps15-A) of Zea mays (Maize).